The chain runs to 92 residues: Small ribosomal subunit protein uS19 (92 aa).

Belongs to the universal ribosomal protein uS19 family.

Functionally, protein S19 forms a complex with S13 that binds strongly to the 16S ribosomal RNA. This is Small ribosomal subunit protein uS19 from Rickettsia canadensis (strain McKiel).